A 79-amino-acid chain; its full sequence is uncharacterized protein (79 aa).

The disordered stretch occupies residues proline 51–isoleucine 79. Over residues lysine 67–isoleucine 79 the composition is skewed to polar residues.

This is an uncharacterized protein from Homo sapiens (Human).